A 579-amino-acid chain; its full sequence is Mitochondrial distribution and morphology protein 36 (579 aa).

Residues 1 to 27 (MDENGTVKPGYELKGLNSGNSRSNMDK) form a disordered region. Phosphoserine is present on Ser42. 2 disordered regions span residues 378–401 (TPIN…GRRL) and 446–518 (DNKH…ESQS). A compositionally biased stretch (polar residues) spans 379 to 390 (PINSSDSDNLSN). The segment covering 446 to 463 (DNKHSTKDTDSNIRRNEH) has biased composition (basic and acidic residues). The segment covering 495–518 (PSQSSSRMSTLPLSPSSSLLESQS) has biased composition (low complexity).

Involved in mitochondrial distribution and morphology. The chain is Mitochondrial distribution and morphology protein 36 (MDM36) from Saccharomyces cerevisiae (strain ATCC 204508 / S288c) (Baker's yeast).